The following is a 407-amino-acid chain: Aminomethyltransferase, mitochondrial (407 aa).

A mitochondrion-targeting transit peptide spans 1 to 29; that stretch reads MRGGLWQLGQSITRRLGQSDKKTIVRRCY. Substrate-binding residues include Glu-234, Arg-265, and Tyr-403.

The protein belongs to the GcvT family. As to quaternary structure, the glycine cleavage system is composed of four proteins: P, T, L and H.

It is found in the mitochondrion. The enzyme catalyses N(6)-[(R)-S(8)-aminomethyldihydrolipoyl]-L-lysyl-[protein] + (6S)-5,6,7,8-tetrahydrofolate = N(6)-[(R)-dihydrolipoyl]-L-lysyl-[protein] + (6R)-5,10-methylene-5,6,7,8-tetrahydrofolate + NH4(+). Functionally, the glycine cleavage system catalyzes the degradation of glycine. The sequence is that of Aminomethyltransferase, mitochondrial (GDCST) from Flaveria anomala (Yellowtops).